Reading from the N-terminus, the 118-residue chain is Small ribosomal subunit protein uS13 (118 aa).

The disordered stretch occupies residues 94 to 118 (GLPVRGQRTQTNARTRKGPRRLARK). The span at 107–118 (RTRKGPRRLARK) shows a compositional bias: basic residues.

Belongs to the universal ribosomal protein uS13 family. Part of the 30S ribosomal subunit. Forms a loose heterodimer with protein S19. Forms two bridges to the 50S subunit in the 70S ribosome.

Functionally, located at the top of the head of the 30S subunit, it contacts several helices of the 16S rRNA. In the 70S ribosome it contacts the 23S rRNA (bridge B1a) and protein L5 of the 50S subunit (bridge B1b), connecting the 2 subunits; these bridges are implicated in subunit movement. Contacts the tRNAs in the A and P-sites. The sequence is that of Small ribosomal subunit protein uS13 from Nitrosococcus oceani (strain ATCC 19707 / BCRC 17464 / JCM 30415 / NCIMB 11848 / C-107).